The following is a 292-amino-acid chain: Bifunctional protein FolD (292 aa).

NADP(+) contacts are provided by residues 166-168 (GRS), Ser-191, and Ile-232.

This sequence belongs to the tetrahydrofolate dehydrogenase/cyclohydrolase family. Homodimer.

It catalyses the reaction (6R)-5,10-methylene-5,6,7,8-tetrahydrofolate + NADP(+) = (6R)-5,10-methenyltetrahydrofolate + NADPH. The enzyme catalyses (6R)-5,10-methenyltetrahydrofolate + H2O = (6R)-10-formyltetrahydrofolate + H(+). Its pathway is one-carbon metabolism; tetrahydrofolate interconversion. Its function is as follows. Catalyzes the oxidation of 5,10-methylenetetrahydrofolate to 5,10-methenyltetrahydrofolate and then the hydrolysis of 5,10-methenyltetrahydrofolate to 10-formyltetrahydrofolate. The sequence is that of Bifunctional protein FolD from Wolbachia pipientis wMel.